A 101-amino-acid chain; its full sequence is MSVSAAVDQYTVLTGDRSKIKDLLCSRLTECGWRDEVRLMCRNILLEKGTNNSFTVEQLITEVTPKARTLVPDAVKKELLMKIRTILTENEEEADEAEEEP.

The protein belongs to the ENY2 family. As to quaternary structure, component of the nuclear pore complex (NPC)-associated AMEX complex (anchoring and mRNA export complex), composed of at least e(y)2 and xmas-2. Component of the SAGA transcription coactivator-HAT complexes, at least composed of Ada2b, e(y)2, Pcaf/Gcn5, Taf10 and Nipped-A/Trrap. Within the SAGA complex, e(y)2, Sgf11, and not/nonstop form an additional subcomplex of SAGA called the DUB module (deubiquitination module). Component of the THO complex, composed of at least e(y)2, HPR1, THO2, THOC5, THOC6 and THOC7. Interacts with e(y)1. Interacts with su(Hw) (via zinc fingers). Interacts with xmas-2; required for localization to the nuclear periphery. Interacts with the nuclear pore complex (NPC).

The protein localises to the nucleus. The protein resides in the nucleoplasm. It localises to the cytoplasm. In terms of biological role, involved in mRNA export coupled transcription activation by association with both the AMEX and the SAGA complexes. The SAGA complex is a multiprotein complex that activates transcription by remodeling chromatin and mediating histone acetylation and deubiquitination. Within the SAGA complex, participates in a subcomplex that specifically deubiquitinates histone H2B. The SAGA complex is recruited to specific gene promoters by activators, where it is required for transcription. Required for nuclear receptor-mediated transactivation. Involved in transcription elongation by recruiting the THO complex onto nascent mRNA. The AMEX complex functions in docking export-competent ribonucleoprotein particles (mRNPs) to the nuclear entrance of the nuclear pore complex (nuclear basket). AMEX participates in mRNA export and accurate chromatin positioning in the nucleus by tethering genes to the nuclear periphery. The protein is Enhancer of yellow 2 transcription factor of Drosophila yakuba (Fruit fly).